The chain runs to 92 residues: Small ribosomal subunit protein bS20 (92 aa).

The interval 1 to 23 (MANTPSAKKRAKQAEKRRSHNAS) is disordered. A compositionally biased stretch (basic residues) spans 7 to 20 (AKKRAKQAEKRRSH).

This sequence belongs to the bacterial ribosomal protein bS20 family.

Functionally, binds directly to 16S ribosomal RNA. In Pseudomonas fluorescens (strain SBW25), this protein is Small ribosomal subunit protein bS20.